Reading from the N-terminus, the 162-residue chain is UPF0303 protein Arad_3071 (162 aa).

The protein belongs to the UPF0303 family.

The sequence is that of UPF0303 protein Arad_3071 from Rhizobium rhizogenes (strain K84 / ATCC BAA-868) (Agrobacterium radiobacter).